The chain runs to 518 residues: MRKINVFDTTLRDGEQSPGVNLNSREKLAIAKQLERLGVDIIEAGFPASSRGDFLAVQEIARTIKNCSVTGLARSVKGDIDAAWEALKDGVSPRIHIFIATSDIHLKHKLKMTREEVKEKAVEMVKYAKERFPIVQWSAEDACRTELPFLAEIVEEVIDAGASVINLPDTVGYLTPDEYGNIFKYMKEHVPNISRVKLSAHCHDDLGMAVANSLSAIENGADQIECAINGIGERAGNAALEEIAVALHVRNDAHQADSSLNLHELKRTSDLVSKLTGMAVPRNKAIVGDNAFAHESGIHQDGFLKEKSTYEIISPELVGVTADALVLGKHSGRHAFKDRLNTLGFQFDSDEINKYFTMFKELTEKKKEITDDDLISLILEEKVTDKKIGYEFLSLQVHYGTSQVPTATVSLKNQENEQLMQEAATGAGSVEAVYNTLGRCIDKNIELTDYRIQSNRKGEDALAQVFVRVTVNGKESSGRGIAQDVLEASAKAYLNAVNRQLVLDCNLDGLKRQTAVGS.

A Pyruvate carboxyltransferase domain is found at 4-266 (INVFDTTLRD…DSSLNLHELK (263 aa)). Mn(2+) contacts are provided by Asp13, His201, His203, and Asn237. Residues 391–518 (EFLSLQVHYG…GLKRQTAVGS (128 aa)) are regulatory domain.

This sequence belongs to the alpha-IPM synthase/homocitrate synthase family. LeuA type 1 subfamily. As to quaternary structure, homodimer. Mn(2+) serves as cofactor.

The protein resides in the cytoplasm. It carries out the reaction 3-methyl-2-oxobutanoate + acetyl-CoA + H2O = (2S)-2-isopropylmalate + CoA + H(+). It participates in amino-acid biosynthesis; L-leucine biosynthesis; L-leucine from 3-methyl-2-oxobutanoate: step 1/4. Functionally, catalyzes the condensation of the acetyl group of acetyl-CoA with 3-methyl-2-oxobutanoate (2-ketoisovalerate) to form 3-carboxy-3-hydroxy-4-methylpentanoate (2-isopropylmalate). This Bacillus velezensis (strain DSM 23117 / BGSC 10A6 / LMG 26770 / FZB42) (Bacillus amyloliquefaciens subsp. plantarum) protein is 2-isopropylmalate synthase.